The sequence spans 376 residues: Erythronate-4-phosphate dehydrogenase (376 aa).

Substrate-binding residues include serine 45 and threonine 67. Aspartate 147 provides a ligand contact to NAD(+). The active site involves arginine 209. Aspartate 233 is an NAD(+) binding site. Glutamate 238 is an active-site residue. The active-site Proton donor is the histidine 255. Glycine 258 is a binding site for NAD(+). Tyrosine 259 is a binding site for substrate.

This sequence belongs to the D-isomer specific 2-hydroxyacid dehydrogenase family. PdxB subfamily. In terms of assembly, homodimer.

The protein resides in the cytoplasm. The enzyme catalyses 4-phospho-D-erythronate + NAD(+) = (R)-3-hydroxy-2-oxo-4-phosphooxybutanoate + NADH + H(+). Its pathway is cofactor biosynthesis; pyridoxine 5'-phosphate biosynthesis; pyridoxine 5'-phosphate from D-erythrose 4-phosphate: step 2/5. In terms of biological role, catalyzes the oxidation of erythronate-4-phosphate to 3-hydroxy-2-oxo-4-phosphonooxybutanoate. In Shewanella oneidensis (strain ATCC 700550 / JCM 31522 / CIP 106686 / LMG 19005 / NCIMB 14063 / MR-1), this protein is Erythronate-4-phosphate dehydrogenase.